The following is a 225-amino-acid chain: Protein-L-isoaspartate O-methyltransferase (225 aa).

The active site involves S63.

It belongs to the methyltransferase superfamily. L-isoaspartyl/D-aspartyl protein methyltransferase family.

It localises to the cytoplasm. It catalyses the reaction [protein]-L-isoaspartate + S-adenosyl-L-methionine = [protein]-L-isoaspartate alpha-methyl ester + S-adenosyl-L-homocysteine. Catalyzes the methyl esterification of L-isoaspartyl residues in peptides and proteins that result from spontaneous decomposition of normal L-aspartyl and L-asparaginyl residues. It plays a role in the repair and/or degradation of damaged proteins. The polypeptide is Protein-L-isoaspartate O-methyltransferase (Staphylothermus marinus (strain ATCC 43588 / DSM 3639 / JCM 9404 / F1)).